The sequence spans 356 residues: Retinoic acid-induced protein 3 (356 aa).

Over 1–35 (MTTPTTAPSGCRSDLDSRYHRLCDLAEGWGIALET) the chain is Extracellular. A helical membrane pass occupies residues 36-56 (LAAVGAVATVACMFALVFLIC). Over 57–68 (KVQDSNKRKMLP) the chain is Cytoplasmic. Residues 69–89 (AQFLFLLGVLGVFGLTFAFII) form a helical membrane-spanning segment. Topologically, residues 90 to 101 (KLDGATGPTRFF) are extracellular. A helical transmembrane segment spans residues 102–122 (LFGVLFAICFSCLLAHAFNLI). Residues 123 to 131 (KLVRGRKPL) lie on the Cytoplasmic side of the membrane. The chain crosses the membrane as a helical span at residues 132 to 152 (SWLVILSLAVGFSLVQDVIAI). Topologically, residues 153 to 178 (EYLVLTMNRTNVNVFSELPAPRRNED) are extracellular. Asn160 is a glycosylation site (N-linked (GlcNAc...) asparagine). A helical transmembrane segment spans residues 179–199 (FVMLLIYVLVLMVLTFFTSFL). The Cytoplasmic segment spans residues 200 to 214 (VFCGSFSGWKRHGFH). The helical transmembrane segment at 215 to 235 (ICFTSFLSIAIWVAWIVLLLI) threads the bilayer. Residues 236–244 (PDIDRKWDD) are Extracellular-facing. Residues 245–265 (TILSTALVANGWVFLAFYILP) traverse the membrane as a helical segment. The Cytoplasmic portion of the chain corresponds to 266 to 356 (EFRQLPRQRS…NDYEGRKGDS (91 aa)). At Ser303 the chain carries Phosphoserine. Phosphotyrosine is present on residues Tyr318 and Tyr321. The segment at 336-356 (IPRAQAPASPYNDYEGRKGDS) is disordered. Ser344 is modified (phosphoserine). Phosphotyrosine occurs at positions 346 and 349.

This sequence belongs to the G-protein coupled receptor 3 family. Interacts (via its transmembrane domain) with EGFR. Phosphorylated in two conserved double-tyrosine motifs, Tyr 318/Tyr-321 and Tyr-346/Tyr-349 by EGFR. Tyr-318 and Tyr-321 are the preferred residues responsible for EGFR-mediated GPRC5A phosphorylation. Expressed predominantly in normal fetal and adult lung. Almost undetectable or expressed at very low levels in other tissues.

Its subcellular location is the cell membrane. Functionally, orphan receptor. Could be involved in modulating differentiation and maintaining homeostasis of epithelial cells. This retinoic acid-inducible GPCR provides evidence for a possible interaction between retinoid and G-protein signaling pathways. Functions as a negative modulator of EGFR signaling. Acts as a lung tumor suppressor. In Mus musculus (Mouse), this protein is Retinoic acid-induced protein 3 (Gprc5a).